A 105-amino-acid polypeptide reads, in one-letter code: MQFYLILLAILYLIVSFISIFKMEVVFTRILRIIMGVLLLFVLALTTMSFPKENWWVFIVLLLLVGNVEVTGFKMLKKDLKGVNILNLMSLFIFVIYFILTIVLF.

The chain crosses the membrane as a helical span at residues 1–21; that stretch reads MQFYLILLAILYLIVSFISIF. The Cytoplasmic portion of the chain corresponds to 22–29; that stretch reads KMEVVFTR. The helical transmembrane segment at 30 to 50 threads the bilayer; that stretch reads ILRIIMGVLLLFVLALTTMSF. Residues 51–55 are Extracellular-facing; the sequence is PKENW. A helical membrane pass occupies residues 56–76; that stretch reads WVFIVLLLLVGNVEVTGFKML. Topologically, residues 77–84 are cytoplasmic; that stretch reads KKDLKGVN. Residues 85–105 traverse the membrane as a helical segment; that stretch reads ILNLMSLFIFVIYFILTIVLF.

It belongs to the MspA family.

It localises to the membrane. In terms of biological role, plays a role in toxin production, resistance to host innate immune mechanisms, and iron homeostasis. This is Membrane-stabilizing protein A from Staphylococcus aureus (strain NCTC 8325 / PS 47).